The sequence spans 54 residues: UPF0391 membrane protein Tbd_2238 (54 aa).

A run of 2 helical transmembrane segments spans residues 5 to 25 and 28 to 48; these read ALVFFIIAIVAAVFGFSGIAA and VGIAKILFVVFLIMAIATFVV.

Belongs to the UPF0391 family.

The protein resides in the cell membrane. The protein is UPF0391 membrane protein Tbd_2238 of Thiobacillus denitrificans (strain ATCC 25259 / T1).